The following is a 567-amino-acid chain: Septation ring formation regulator EzrA (567 aa).

The Extracellular segment spans residues Met-1–Gly-2. The chain crosses the membrane as a helical span at residues Met-3–Tyr-21. The Cytoplasmic segment spans residues Arg-22–Gln-567. Coiled coils occupy residues Tyr-98–Tyr-159 and His-251–Ala-497.

Belongs to the EzrA family.

The protein resides in the cell membrane. Its function is as follows. Negative regulator of FtsZ ring formation; modulates the frequency and position of FtsZ ring formation. Inhibits FtsZ ring formation at polar sites. Interacts either with FtsZ or with one of its binding partners to promote depolymerization. This chain is Septation ring formation regulator EzrA, found in Geobacillus kaustophilus (strain HTA426).